Here is a 208-residue protein sequence, read N- to C-terminus: Small ribosomal subunit protein uS2 (208 aa).

A disordered region spans residues 189–208 (KPDQDLPVPPEEFETRLVQT).

Belongs to the universal ribosomal protein uS2 family.

The sequence is that of Small ribosomal subunit protein uS2 from Pyrobaculum arsenaticum (strain DSM 13514 / JCM 11321 / PZ6).